The sequence spans 447 residues: Probable glycine dehydrogenase (decarboxylating) subunit 1 (447 aa).

The protein belongs to the GcvP family. N-terminal subunit subfamily. The glycine cleavage system is composed of four proteins: P, T, L and H. In this organism, the P 'protein' is a heterodimer of two subunits.

The enzyme catalyses N(6)-[(R)-lipoyl]-L-lysyl-[glycine-cleavage complex H protein] + glycine + H(+) = N(6)-[(R)-S(8)-aminomethyldihydrolipoyl]-L-lysyl-[glycine-cleavage complex H protein] + CO2. The glycine cleavage system catalyzes the degradation of glycine. The P protein binds the alpha-amino group of glycine through its pyridoxal phosphate cofactor; CO(2) is released and the remaining methylamine moiety is then transferred to the lipoamide cofactor of the H protein. The protein is Probable glycine dehydrogenase (decarboxylating) subunit 1 of Bacillus anthracis (strain A0248).